Consider the following 273-residue polypeptide: Proteasome subunit beta type-10 (273 aa).

At Met-1 the chain carries N-acetylmethionine. Positions Met-1–Gly-39 are cleaved as a propeptide — removed in mature form. Catalysis depends on Thr-40, which acts as the Nucleophile. A Phosphoserine modification is found at Ser-230.

It belongs to the peptidase T1B family. The 26S proteasome consists of a 20S proteasome core and two 19S regulatory subunits. The 20S proteasome core is composed of 28 subunits that are arranged in four stacked rings, resulting in a barrel-shaped structure. The two end rings are each formed by seven alpha subunits, and the two central rings are each formed by seven beta subunits. The catalytic chamber with the active sites is on the inside of the barrel. Component of the immunoproteasome, where it displaces the equivalent housekeeping subunit PSMB7. Component of the spermatoproteasome, a form of the proteasome specifically found in testis. In terms of assembly, (Microbial infection) Interacts with HIV-1 TAT protein. Autocleaved. The resulting N-terminal Thr residue of the mature subunit is responsible for the nucleophile proteolytic activity.

It localises to the cytoplasm. It is found in the nucleus. The enzyme catalyses Cleavage of peptide bonds with very broad specificity.. The proteasome is a multicatalytic proteinase complex which is characterized by its ability to cleave peptides with Arg, Phe, Tyr, Leu, and Glu adjacent to the leaving group at neutral or slightly basic pH. The proteasome has an ATP-dependent proteolytic activity. This subunit is involved in antigen processing to generate class I binding peptides. In Homo sapiens (Human), this protein is Proteasome subunit beta type-10 (PSMB10).